Reading from the N-terminus, the 243-residue chain is uncharacterized protein (243 aa).

Basic and acidic residues-rich tracts occupy residues M1–E11 and R167–R178. Disordered stretches follow at residues M1–R26 and E146–F243. Residues S185–E200 are compositionally biased toward low complexity.

This is an uncharacterized protein from Canis lupus familiaris (Dog).